We begin with the raw amino-acid sequence, 185 residues long: Ribosome-recycling factor (185 aa).

The protein belongs to the RRF family.

The protein resides in the cytoplasm. Its function is as follows. Responsible for the release of ribosomes from messenger RNA at the termination of protein biosynthesis. May increase the efficiency of translation by recycling ribosomes from one round of translation to another. The protein is Ribosome-recycling factor of Ehrlichia ruminantium (strain Gardel).